We begin with the raw amino-acid sequence, 88 residues long: Small ribosomal subunit protein bS20 (88 aa).

Positions 1–23 (MANSPQAKKRARQNDKARAHNAS) are disordered.

This sequence belongs to the bacterial ribosomal protein bS20 family.

Functionally, binds directly to 16S ribosomal RNA. The protein is Small ribosomal subunit protein bS20 of Teredinibacter turnerae (strain ATCC 39867 / T7901).